Reading from the N-terminus, the 37-residue chain is Large ribosomal subunit protein bL36 (37 aa).

This sequence belongs to the bacterial ribosomal protein bL36 family.

The polypeptide is Large ribosomal subunit protein bL36 (Streptomyces avermitilis (strain ATCC 31267 / DSM 46492 / JCM 5070 / NBRC 14893 / NCIMB 12804 / NRRL 8165 / MA-4680)).